The primary structure comprises 556 residues: Small ribosomal subunit protein uS3m (556 aa).

It belongs to the universal ribosomal protein uS3 family. Component of the mitochondrial ribosome small subunit.

The protein localises to the mitochondrion. This chain is Small ribosomal subunit protein uS3m (RPS3), found in Arabidopsis thaliana (Mouse-ear cress).